Consider the following 1309-residue polypeptide: DNA repair protein RAD9 (1309 aa).

Residues 1–19 (MSGQLVQWKSSPDRVTQSA) are compositionally biased toward polar residues. The tract at residues 1–39 (MSGQLVQWKSSPDRVTQSAIKEALHSPLADGDMNEMNVP) is disordered. Residues Ser26, Ser56, and Ser205 each carry the phosphoserine modification. Thr218 carries the phosphothreonine modification. Ser248 is subject to Phosphoserine. The disordered stretch occupies residues 280 to 299 (NIGAIEEKNPVKKKSENYSS). Over residues 284–299 (IEEKNPVKKKSENYSS) the composition is skewed to basic and acidic residues. 2 positions are modified to phosphoserine: Ser312 and Ser315. The disordered stretch occupies residues 342 to 365 (NSAVSGTPSRNNAEEEMYSSESVN). Residues 343–352 (SAVSGTPSRN) are compositionally biased toward polar residues. The residue at position 462 (Ser462) is a Phosphoserine. Residues Thr471 and Thr474 each carry the phosphothreonine modification. Residues 490–512 (PETSSPSKNTMSKPSNSSPIPKE) form a disordered region. Residues 491 to 508 (ETSSPSKNTMSKPSNSSP) are compositionally biased toward polar residues. Ser568 carries the post-translational modification Phosphoserine. Disordered stretches follow at residues 636-655 (KGNS…DKQD) and 691-731 (IIQN…NSDL). A compositionally biased stretch (basic and acidic residues) spans 642–655 (LHDDNKECNSDKQD). Position 729 is a phosphoserine (Ser729). The 129-residue stretch at 994–1122 (RTGNVFDKCI…RIVPHLIYQY (129 aa)) folds into the BRCT domain.

In terms of assembly, physically associates with RAD53.

The protein localises to the nucleus. In terms of biological role, essential for cell cycle arrest at the G2 stage following DNA damage by X-irradiation or inactivation of DNA ligase. This Saccharomyces cerevisiae (strain ATCC 204508 / S288c) (Baker's yeast) protein is DNA repair protein RAD9 (RAD9).